We begin with the raw amino-acid sequence, 296 residues long: Putative fatty acid elongase DDB_G0272012 (296 aa).

7 helical membrane-spanning segments follow: residues Phe51–Leu71, Val83–Leu103, Trp134–Leu154, Leu159–Tyr179, Leu184–Phe204, Met220–Ile240, and Ala253–Val273. Positions Ser277–Thr290 are enriched in low complexity. The segment at Ser277–Asp296 is disordered.

The protein belongs to the ELO family.

It is found in the membrane. The catalysed reaction is a very-long-chain acyl-CoA + malonyl-CoA + H(+) = a very-long-chain 3-oxoacyl-CoA + CO2 + CoA. In terms of biological role, could be implicated in synthesis of very long chain fatty acids. The protein is Putative fatty acid elongase DDB_G0272012 of Dictyostelium discoideum (Social amoeba).